We begin with the raw amino-acid sequence, 357 residues long: Alanine racemase (357 aa).

The active-site Proton acceptor; specific for D-alanine is K34. At K34 the chain carries N6-(pyridoxal phosphate)lysine. R130 lines the substrate pocket. Y253 acts as the Proton acceptor; specific for L-alanine in catalysis. M301 serves as a coordination point for substrate.

It belongs to the alanine racemase family. Pyridoxal 5'-phosphate serves as cofactor.

It catalyses the reaction L-alanine = D-alanine. Its pathway is amino-acid biosynthesis; D-alanine biosynthesis; D-alanine from L-alanine: step 1/1. Functionally, catalyzes the interconversion of L-alanine and D-alanine. May also act on other amino acids. The protein is Alanine racemase (alr) of Mannheimia succiniciproducens (strain KCTC 0769BP / MBEL55E).